The chain runs to 388 residues: MREYAVFTSESVSEGHPDKMADQISDAILDAILKEDPYARVACETLVKTGAVVLAGEITTTANVDFEAIVRQTVNGIGYHHSDLGFDGSTCAIINMIGKQSPEIAQGVDRQKPEDQGAGDQGLMFGYASRETDVLMPAPISYAHRLMERQAELRRSGALPWLRPDAKSQVTFAYENGMPVRLDAVVLSTQHDPEISQAQLKEAVIEEIVKPVIPSEMFHAGTKFHINPTGMFVIGGPVGDCGLTGRKIIVDTYGGMARHGGGAFSGKDPSKVDRSAAYAGRYVAKNIVAAGLADKCEIQVSYAIGVAEPTSISINTFNTAKVDEELIIALVREHFDLRPYGITRMLDLLQPMYKQTAAYGHFGREGSDTAFTWEKTDKVEVLKDAAGL.

Position 16 (histidine 16) interacts with ATP. Residue aspartate 18 coordinates Mg(2+). Residue glutamate 44 participates in K(+) binding. Glutamate 57 and glutamine 100 together coordinate L-methionine. The flexible loop stretch occupies residues 100-110; the sequence is QSPEIAQGVDR. ATP-binding positions include 165–167, aspartate 240, 246–247, alanine 263, and lysine 267; these read DAK and RK. Aspartate 240 contacts L-methionine. L-methionine is bound at residue lysine 271.

The protein belongs to the AdoMet synthase family. Homotetramer; dimer of dimers. It depends on Mg(2+) as a cofactor. K(+) is required as a cofactor.

Its subcellular location is the cytoplasm. It catalyses the reaction L-methionine + ATP + H2O = S-adenosyl-L-methionine + phosphate + diphosphate. It participates in amino-acid biosynthesis; S-adenosyl-L-methionine biosynthesis; S-adenosyl-L-methionine from L-methionine: step 1/1. Functionally, catalyzes the formation of S-adenosylmethionine (AdoMet) from methionine and ATP. The overall synthetic reaction is composed of two sequential steps, AdoMet formation and the subsequent tripolyphosphate hydrolysis which occurs prior to release of AdoMet from the enzyme. The sequence is that of S-adenosylmethionine synthase from Acinetobacter baylyi (strain ATCC 33305 / BD413 / ADP1).